The following is a 934-amino-acid chain: MFYHGASANQHWIAVDDLSKVPVDVDHYNVVPFQFRRAGEYKEPVLSGIVELDEVKFVVSQSDAAEQWQQLTAEDGTVWRSRAYHGKLGKYSDMAVGAFNKVLNLVRGAETFDIALVTCAYIAMFYTLFNLFARMRAVGSKVWLGLSTLVSSFFAFLFALYITTRVLDLSIPFLSLSEGIPFFVAVVGFNNKILLAEKVLQNQLNAQSSKNDAPTVLYQALREQGPLLLRDHLFMITAFLGCSFYASYLDGLKNFCILAALILAFDILTTSTFLSAILSLKLEINQIHRSTLLREQLEDDGLTETTVDDVLKSNSLAGTKTFTDAPSTLVTVAKVAGVSVFFGLHFYGFGSAWLSDLSAGNETNDTFTLYDAVADQIPIGSNGTLVTLFPTRFFLPEKLSTQIEAVVLSFIGLISTAARDKYISKFILFAFAVSASINVYLLNVARIHTTRLEDAIELKKPKKKASKTAVSVPKAVVVKDSETTKSSEILHSSSESESEQSSRPLEQVIELYKDGKVKTLVDDEVVSLVTAGKLPLYALEKQLGDNLRAVAIRRKAISDLADAPVLRSNKLPYLHYDYDRVFGACCENVIGYMPLPVGVAGPLIIDGKPYHIPMATTEGCLVASAMRGCKAINLGGGVTTVLTKDGMTRGPCVKFPSLKRAGQCKLWLDSDEGQEEMKKAFNSTSRFARLQHLQTALAGDLLFIRFRTVTGDAMGMNMISKGVEYALKQMTEVFGWDDMMVVSVSGNYCTDKKPAAVNWINGRGKSVVAEASIPKDAVVKVLKSSVKAVVDVNVNKNLIGSAMAGSVGGFNAQAANMVTAVYLALGQDPAQNVESSNCITLMTETEDGDLKVSVSMPSIEVGTIGGGTILDPQGSMLELLGVRGPADVPGENARQLAKIVASIVLSGELSLVSALAAGHLVQSHMQHNRAAAKK.

Residues 1-111 (MFYHGASANQ…VLNLVRGAET (111 aa)) lie on the Lumenal side of the membrane. A helical transmembrane segment spans residues 112–132 (FDIALVTCAYIAMFYTLFNLF). The 168-residue stretch at 113-280 (DIALVTCAYI…STFLSAILSL (168 aa)) folds into the SSD domain. Residues 133 to 141 (ARMRAVGSK) lie on the Cytoplasmic side of the membrane. The chain crosses the membrane as a helical span at residues 142–162 (VWLGLSTLVSSFFAFLFALYI). Topologically, residues 163–168 (TTRVLD) are lumenal. Residues 169-189 (LSIPFLSLSEGIPFFVAVVGF) traverse the membrane as a helical segment. The Cytoplasmic portion of the chain corresponds to 190–231 (NNKILLAEKVLQNQLNAQSSKNDAPTVLYQALREQGPLLLRD). Residues 232 to 252 (HLFMITAFLGCSFYASYLDGL) form a helical membrane-spanning segment. Over 253 to 256 (KNFC) the chain is Lumenal. Residues 257 to 277 (ILAALILAFDILTTSTFLSAI) traverse the membrane as a helical segment. Residues 278-334 (LSLKLEINQIHRSTLLREQLEDDGLTETTVDDVLKSNSLAGTKTFTDAPSTLVTVAK) are Cytoplasmic-facing. Residues 335 to 355 (VAGVSVFFGLHFYGFGSAWLS) traverse the membrane as a helical segment. Topologically, residues 356 to 421 (DLSAGNETND…GLISTAARDK (66 aa)) are lumenal. Asn-361, Asn-364, and Asn-382 each carry an N-linked (GlcNAc...) asparagine glycan. A helical transmembrane segment spans residues 422–442 (YISKFILFAFAVSASINVYLL). The Cytoplasmic portion of the chain corresponds to 443 to 934 (NVARIHTTRL…MQHNRAAAKK (492 aa)). Glu-618 functions as the Charge relay system in the catalytic mechanism. CoA is bound at residue 624–630 (SAMRGCK). NADP(+)-binding positions include 685-687 (SRF) and 712-720 (DAMGMNMIS). The active-site Charge relay system is the Lys-752. Position 781–783 (781–783 (VLK)) interacts with CoA. Catalysis depends on Asp-828, which acts as the Charge relay system. A CoA-binding site is contributed by 923 to 924 (SH). His-924 (proton donor) is an active-site residue. 928–929 (NR) provides a ligand contact to NADP(+).

This sequence belongs to the HMG-CoA reductase family.

The protein resides in the endoplasmic reticulum membrane. The catalysed reaction is (R)-mevalonate + 2 NADP(+) + CoA = (3S)-3-hydroxy-3-methylglutaryl-CoA + 2 NADPH + 2 H(+). Its pathway is metabolic intermediate biosynthesis; (R)-mevalonate biosynthesis; (R)-mevalonate from acetyl-CoA: step 3/3. Functionally, HMG-CoA reductase; part of the first module of ergosterol biosynthesis pathway that includes the early steps of the pathway, conserved across all eukaryotes, and which results in the formation of mevalonate from acetyl-coenzyme A (acetyl-CoA). In this module, the cytosolic acetyl-CoA acetyltransferase catalyzes the formation of acetoacetyl-CoA. The hydroxymethylglutaryl-CoA synthase then condenses acetyl-CoA with acetoacetyl-CoA to form HMG-CoA. The rate-limiting step of the early module is the reduction to mevalonate by the 3-hydroxy-3-methylglutaryl-coenzyme A (HMG-CoA) reductase. The sequence is that of 3-hydroxy-3-methylglutaryl-coenzyme A reductase from Cyberlindnera jadinii (Torula yeast).